The primary structure comprises 195 residues: Flavin-dependent monooxygenase, reductase subunit HsaB (195 aa).

FAD-binding positions include 42 to 46 (PVGFA), 48 to 49 (QS), 63 to 65 (CPT), 69 to 70 (RS), and 95 to 96 (RF). 160-163 (FYRG) contacts NAD(+).

This sequence belongs to the non-flavoprotein flavin reductase family. HsaAB monooxygenase consists of an oxygenase component HsaA and a reductase component HsaB.

The catalysed reaction is a reduced flavin + NAD(+) = an oxidized flavin + NADH + 2 H(+). It functions in the pathway lipid metabolism; steroid biosynthesis. In terms of biological role, catalyzes the reduction of free flavins (FMN or FAD) by NADH. Subsequently, the reduced flavins diffuse to the HsaA oxygenase subunit. This is Flavin-dependent monooxygenase, reductase subunit HsaB (hsaB) from Rhodococcus jostii (strain RHA1).